We begin with the raw amino-acid sequence, 145 residues long: NADH-quinone oxidoreductase subunit A (145 aa).

3 helical membrane passes run 14 to 34 (FAVF…GAWF), 66 to 86 (FYLV…LYAW), and 96 to 116 (VGFV…FYLV).

This sequence belongs to the complex I subunit 3 family. In terms of assembly, NDH-1 is composed of 13 different subunits. Subunits NuoA, H, J, K, L, M, N constitute the membrane sector of the complex.

Its subcellular location is the cell inner membrane. The enzyme catalyses a quinone + NADH + 5 H(+)(in) = a quinol + NAD(+) + 4 H(+)(out). In terms of biological role, NDH-1 shuttles electrons from NADH, via FMN and iron-sulfur (Fe-S) centers, to quinones in the respiratory chain. The immediate electron acceptor for the enzyme in this species is believed to be ubiquinone. Couples the redox reaction to proton translocation (for every two electrons transferred, four hydrogen ions are translocated across the cytoplasmic membrane), and thus conserves the redox energy in a proton gradient. In Erwinia tasmaniensis (strain DSM 17950 / CFBP 7177 / CIP 109463 / NCPPB 4357 / Et1/99), this protein is NADH-quinone oxidoreductase subunit A.